The sequence spans 145 residues: Large ribosomal subunit protein uL15 (145 aa).

Residues 1 to 58 (MFSLLKPKGAAKRRKIVGRGPGSGLGKTSGRGQKGQKARNTSPRLGFEGGQTPLYRRL) are disordered. The segment covering 19–33 (RGPGSGLGKTSGRGQ) has biased composition (gly residues).

The protein belongs to the universal ribosomal protein uL15 family. Part of the 50S ribosomal subunit.

Binds to the 23S rRNA. This chain is Large ribosomal subunit protein uL15, found in Borreliella afzelii (strain PKo) (Borrelia afzelii).